Consider the following 410-residue polypeptide: MTHAYTKVRQALCYGSATLGAAALAALIAAGSAAAAESHGVATAKAAAADLAAGKADDPVVLKAAPINARRVFVYDPKHFAAISQFYMIDGDTARVVGTADGGFLSNPVVASDGSFFGQASTVYERIARGKRTDYVELLDPQTNNPIADIELPNSPRFLVGTYPWMTALTPNNKTLLFYQFSPQPAVGVVDLAGKKFDRMIEVPDCYHIFPSSNDTFFMHCRDGSLLKVGIGADGKSQTKRTEIFHKENEYLINHPAYSPKSGRLVWPTYTGKIFQIDLSSQDAKFLPAIEAFTDAEKKEGWAPGGWQQVAYHRESDRIFLLGDQRAASKHKAPSRFLFVIDAKTGKRINKIELKHEIDSVGVSQDAKPQLYALSTGDKALYIFDPETGKEVSSVNQLGAGPQVVMTSDM.

Residues 1–35 (MTHAYTKVRQALCYGSATLGAAALAALIAAGSAAA) form the signal peptide.

The protein belongs to the aromatic amine dehydrogenase heavy chain family. Tetramer of two light and two heavy chains.

The protein resides in the periplasm. It catalyses the reaction 2 oxidized [amicyanin] + methylamine + H2O = 2 reduced [amicyanin] + formaldehyde + NH4(+) + 2 H(+). In terms of biological role, methylamine dehydrogenase carries out the oxidation of methylamine. Electrons are passed from methylamine dehydrogenase to amicyanin. This Methylorubrum extorquens (strain ATCC 14718 / DSM 1338 / JCM 2805 / NCIMB 9133 / AM1) (Methylobacterium extorquens) protein is Methylamine dehydrogenase heavy chain (mauB).